Consider the following 362-residue polypeptide: EARP-interacting protein 1 (362 aa).

WD repeat units lie at residues 61–108, 206–246, 250–290, and 319–359; these read HPAG…RTLE, AHIH…SALT, PHAH…SEQQ, and EHED…KYAL.

Belongs to the WD repeat EIPR1 family. Expressed in the hypodermis and the pharynx.

It is found in the cytoplasm. Functionally, plays a role in the trafficking of cargo to dense-core vesicles, probably through association with the endosome-associated recycling protein (EARP) complex. Important for neuronal function. The protein is EARP-interacting protein 1 of Caenorhabditis elegans.